The sequence spans 285 residues: 4-hydroxybenzoate octaprenyltransferase (285 aa).

8 helical membrane passes run 28–48 (LWAM…WIFV), 86–106 (IAAW…FALV), 110–130 (NALT…YPFF), 133–153 (FFAI…PMAF), 165–185 (WLML…YAMV), 210–230 (IMLC…LLGL), 232–252 (WPYW…YTLI), and 262–284 (AAFR…AYAI).

The protein belongs to the UbiA prenyltransferase family. The cofactor is Mg(2+).

Its subcellular location is the cell inner membrane. It catalyses the reaction all-trans-octaprenyl diphosphate + 4-hydroxybenzoate = 4-hydroxy-3-(all-trans-octaprenyl)benzoate + diphosphate. The protein operates within cofactor biosynthesis; ubiquinone biosynthesis. Catalyzes the prenylation of para-hydroxybenzoate (PHB) with an all-trans polyprenyl group. Mediates the second step in the final reaction sequence of ubiquinone-8 (UQ-8) biosynthesis, which is the condensation of the polyisoprenoid side chain with PHB, generating the first membrane-bound Q intermediate 3-octaprenyl-4-hydroxybenzoate. This Cupriavidus necator (strain ATCC 17699 / DSM 428 / KCTC 22496 / NCIMB 10442 / H16 / Stanier 337) (Ralstonia eutropha) protein is 4-hydroxybenzoate octaprenyltransferase.